The following is an 82-amino-acid chain: Defensin-like protein 156 (82 aa).

Positions 1–27 are cleaved as a signal peptide; sequence MAKISCSYFLVLMLVFSVFSLVEKTKG. 4 disulfide bridges follow: Cys31–Cys77, Cys41–Cys60, Cys46–Cys71, and Cys50–Cys73.

It belongs to the DEFL family. Expressed in flower buds, but not in stems, roots or rosette leaves.

The protein resides in the secreted. The chain is Defensin-like protein 156 (LCR21) from Arabidopsis thaliana (Mouse-ear cress).